A 531-amino-acid polypeptide reads, in one-letter code: Probable rhamnogalacturonate lyase A (531 aa).

A signal peptide spans 1 to 20 (MLSKALFFSSLPLWAKVASA). 2 cysteine pairs are disulfide-bonded: C50–C93 and C184–C193. An N-linked (GlcNAc...) asparagine glycan is attached at N351.

This sequence belongs to the polysaccharide lyase 4 family.

It localises to the secreted. It catalyses the reaction Endotype eliminative cleavage of L-alpha-rhamnopyranosyl-(1-&gt;4)-alpha-D-galactopyranosyluronic acid bonds of rhamnogalacturonan I domains in ramified hairy regions of pectin leaving L-rhamnopyranose at the reducing end and 4-deoxy-4,5-unsaturated D-galactopyranosyluronic acid at the non-reducing end.. In terms of biological role, pectinolytic enzymes consist of four classes of enzymes: pectin lyase, polygalacturonase, pectin methylesterase and rhamnogalacturonase. Degrades the rhamnogalacturonan I (RG-I) backbone of pectin. This is Probable rhamnogalacturonate lyase A (rglA) from Aspergillus terreus (strain NIH 2624 / FGSC A1156).